Here is a 211-residue protein sequence, read N- to C-terminus: Large ribosomal subunit protein uL3 (211 aa).

Positions 122 to 147 (AIKRHGQSRGPMAHGSRYHRRPGSMG) are disordered.

This sequence belongs to the universal ribosomal protein uL3 family. In terms of assembly, part of the 50S ribosomal subunit. Forms a cluster with proteins L14 and L19.

Functionally, one of the primary rRNA binding proteins, it binds directly near the 3'-end of the 23S rRNA, where it nucleates assembly of the 50S subunit. The polypeptide is Large ribosomal subunit protein uL3 (Geobacillus sp. (strain WCH70)).